The chain runs to 531 residues: uncharacterized protein (531 aa).

Residues 1–22 form the signal peptide; it reads MRLQFKLLGFLTLLGTSTILSA. A lipid anchor (N-palmitoyl cysteine) is attached at cysteine 23. A lipid anchor (S-diacylglycerol cysteine) is attached at cysteine 23. The tract at residues 31 to 51 is disordered; sequence EPNNIEESGPITPTTPTTDVP. The span at 40–51 shows a compositional bias: low complexity; it reads PITPTTPTTDVP.

This sequence belongs to the MG067/MG068/MG395 family.

The protein resides in the cell membrane. This is an uncharacterized protein from Mycoplasma pneumoniae (strain ATCC 29342 / M129 / Subtype 1) (Mycoplasmoides pneumoniae).